The sequence spans 132 residues: Small ribosomal subunit protein uS8 (132 aa).

The protein belongs to the universal ribosomal protein uS8 family. As to quaternary structure, part of the 30S ribosomal subunit. Contacts proteins S5 and S12.

Its function is as follows. One of the primary rRNA binding proteins, it binds directly to 16S rRNA central domain where it helps coordinate assembly of the platform of the 30S subunit. This Rickettsia bellii (strain OSU 85-389) protein is Small ribosomal subunit protein uS8.